We begin with the raw amino-acid sequence, 407 residues long: Arginine deiminase (407 aa).

The Amidino-cysteine intermediate role is filled by Cys-397.

The protein belongs to the arginine deiminase family.

It is found in the cytoplasm. It catalyses the reaction L-arginine + H2O = L-citrulline + NH4(+). It functions in the pathway amino-acid degradation; L-arginine degradation via ADI pathway; carbamoyl phosphate from L-arginine: step 1/2. The protein is Arginine deiminase of Limosilactobacillus fermentum (strain NBRC 3956 / LMG 18251) (Lactobacillus fermentum).